Here is a 240-residue protein sequence, read N- to C-terminus: Splicing factor U2AF 35 kDa subunit (240 aa).

Residue Ala-2 is modified to N-acetylalanine. The C3H1-type 1 zinc finger occupies 12–40 (EKDKVNCSFYFKIGACRHGDRCSRLHNKP). The residue at position 39 (Lys-39) is an N6-methyllysine. Ser-61 and Ser-145 each carry phosphoserine. One can recognise an RRM domain in the interval 65 to 147 (LRCAVSDVEM…QPIHAELSPV (83 aa)). The C3H1-type 2 zinc-finger motif lies at 149–176 (DFREACCRQYEMGECTRGGFCNFMHLKP). At Arg-165 the chain carries Omega-N-methylarginine. Positions 183–240 (RELYGRRRKKHRSRSRSRERRSRSRDRGRGGGGGGGGGGGGRERDRRRSRDRERSGRF) are disordered. A compositionally biased stretch (basic residues) spans 188–208 (RRRKKHRSRSRSRERRSRSRD). Residues 212–222 (GGGGGGGGGGG) show a composition bias toward gly residues. Residues 223 to 240 (GRERDRRRSRDRERSGRF) are compositionally biased toward basic and acidic residues.

The protein belongs to the splicing factor SR family. Identified in the spliceosome C complex. Heterodimer with U2AF2. Interacts (via RS domain) with PHF5A (via N-terminus). Interacts with ZRANB2. Interacts with SDE2. Interacts with SF3B1.

It is found in the nucleus. The protein localises to the nucleus speckle. Plays a critical role in both constitutive and enhancer-dependent splicing by mediating protein-protein interactions and protein-RNA interactions required for accurate 3'-splice site selection. Recruits U2 snRNP to the branch point. Directly mediates interactions between U2AF2 and proteins bound to the enhancers and thus may function as a bridge between U2AF2 and the enhancer complex to recruit it to the adjacent intron. This chain is Splicing factor U2AF 35 kDa subunit (U2AF1), found in Homo sapiens (Human).